Reading from the N-terminus, the 357-residue chain is Peptide chain release factor 1 (357 aa).

Gln-234 carries the N5-methylglutamine modification. Residues Lys-284–Arg-307 show a composition bias toward basic and acidic residues. Positions Lys-284 to Gln-313 are disordered.

It belongs to the prokaryotic/mitochondrial release factor family. In terms of processing, methylated by PrmC. Methylation increases the termination efficiency of RF1.

It localises to the cytoplasm. In terms of biological role, peptide chain release factor 1 directs the termination of translation in response to the peptide chain termination codons UAG and UAA. In Borrelia hermsii (strain HS1 / DAH), this protein is Peptide chain release factor 1.